Here is an 82-residue protein sequence, read N- to C-terminus: ATP synthase subunit c, chloroplastic (82 aa).

2 consecutive transmembrane segments (helical) span residues 7-27 and 57-77; these read AASV…PGIG and LAFM…LLFA.

It belongs to the ATPase C chain family. In terms of assembly, F-type ATPases have 2 components, F(1) - the catalytic core - and F(0) - the membrane proton channel. F(1) has five subunits: alpha(3), beta(3), gamma(1), delta(1), epsilon(1). F(0) has four main subunits: a(1), b(1), b'(1) and c(10-14). The alpha and beta chains form an alternating ring which encloses part of the gamma chain. F(1) is attached to F(0) by a central stalk formed by the gamma and epsilon chains, while a peripheral stalk is formed by the delta, b and b' chains.

The protein resides in the plastid. It localises to the chloroplast thylakoid membrane. F(1)F(0) ATP synthase produces ATP from ADP in the presence of a proton or sodium gradient. F-type ATPases consist of two structural domains, F(1) containing the extramembraneous catalytic core and F(0) containing the membrane proton channel, linked together by a central stalk and a peripheral stalk. During catalysis, ATP synthesis in the catalytic domain of F(1) is coupled via a rotary mechanism of the central stalk subunits to proton translocation. In terms of biological role, key component of the F(0) channel; it plays a direct role in translocation across the membrane. A homomeric c-ring of between 10-14 subunits forms the central stalk rotor element with the F(1) delta and epsilon subunits. The polypeptide is ATP synthase subunit c, chloroplastic (Rhodomonas salina (Cryptomonas salina)).